The primary structure comprises 534 residues: CTP synthase (534 aa).

The tract at residues Met-1–Leu-266 is amidoligase domain. Ser-14 contributes to the CTP binding site. A UTP-binding site is contributed by Ser-14. ATP-binding positions include Ser-15–Leu-20 and Asp-72. Residues Asp-72 and Glu-140 each coordinate Mg(2+). CTP-binding positions include Asp-147 to Glu-149, Lys-187 to Gln-192, and Lys-223. UTP is bound by residues Lys-187 to Gln-192 and Lys-223. In terms of domain architecture, Glutamine amidotransferase type-1 spans Lys-291–Lys-534. Gly-353 serves as a coordination point for L-glutamine. Cys-380 serves as the catalytic Nucleophile; for glutamine hydrolysis. L-glutamine-binding positions include Phe-381–Gln-384, Glu-404, and Arg-464. Residues His-509 and Glu-511 contribute to the active site.

The protein belongs to the CTP synthase family. As to quaternary structure, homotetramer.

The enzyme catalyses UTP + L-glutamine + ATP + H2O = CTP + L-glutamate + ADP + phosphate + 2 H(+). It catalyses the reaction L-glutamine + H2O = L-glutamate + NH4(+). It carries out the reaction UTP + NH4(+) + ATP = CTP + ADP + phosphate + 2 H(+). It participates in pyrimidine metabolism; CTP biosynthesis via de novo pathway; CTP from UDP: step 2/2. With respect to regulation, allosterically activated by GTP, when glutamine is the substrate; GTP has no effect on the reaction when ammonia is the substrate. The allosteric effector GTP functions by stabilizing the protein conformation that binds the tetrahedral intermediate(s) formed during glutamine hydrolysis. Inhibited by the product CTP, via allosteric rather than competitive inhibition. In terms of biological role, catalyzes the ATP-dependent amination of UTP to CTP with either L-glutamine or ammonia as the source of nitrogen. Regulates intracellular CTP levels through interactions with the four ribonucleotide triphosphates. The chain is CTP synthase from Bdellovibrio bacteriovorus (strain ATCC 15356 / DSM 50701 / NCIMB 9529 / HD100).